The chain runs to 230 residues: Phosphoribosylformylglycinamidine synthase subunit PurQ (230 aa).

A Glutamine amidotransferase type-1 domain is found at 3-230; the sequence is SAIIVFPGTN…LFQSIVESLS (228 aa). Cys87 (nucleophile) is an active-site residue. Residues His204 and Glu206 contribute to the active site.

Part of the FGAM synthase complex composed of 1 PurL, 1 PurQ and 2 PurS subunits.

Its subcellular location is the cytoplasm. The enzyme catalyses N(2)-formyl-N(1)-(5-phospho-beta-D-ribosyl)glycinamide + L-glutamine + ATP + H2O = 2-formamido-N(1)-(5-O-phospho-beta-D-ribosyl)acetamidine + L-glutamate + ADP + phosphate + H(+). It catalyses the reaction L-glutamine + H2O = L-glutamate + NH4(+). It participates in purine metabolism; IMP biosynthesis via de novo pathway; 5-amino-1-(5-phospho-D-ribosyl)imidazole from N(2)-formyl-N(1)-(5-phospho-D-ribosyl)glycinamide: step 1/2. Its function is as follows. Part of the phosphoribosylformylglycinamidine synthase complex involved in the purines biosynthetic pathway. Catalyzes the ATP-dependent conversion of formylglycinamide ribonucleotide (FGAR) and glutamine to yield formylglycinamidine ribonucleotide (FGAM) and glutamate. The FGAM synthase complex is composed of three subunits. PurQ produces an ammonia molecule by converting glutamine to glutamate. PurL transfers the ammonia molecule to FGAR to form FGAM in an ATP-dependent manner. PurS interacts with PurQ and PurL and is thought to assist in the transfer of the ammonia molecule from PurQ to PurL. The sequence is that of Phosphoribosylformylglycinamidine synthase subunit PurQ from Rhodospirillum rubrum (strain ATCC 11170 / ATH 1.1.1 / DSM 467 / LMG 4362 / NCIMB 8255 / S1).